The sequence spans 242 residues: MRCFKATIAYDGAYFLGYAKQPNKLGVQDKIESALNALGIKSVVVAAGRTDKGVHANNQVLSFYAQKHWNAAKLFYYLAPKLAPHVVLKKLEEKNFHARFDAQKRAYRYLLTKNLKTPFLAPYIACGDYGSLDALNTALKQFTGKHDFSMFKKEGGATTNPKRAIFNAFAYKTFIIGHECVVFKIIGDAFLRSSVRLIVQACVQYSLEKITLAEIQAQIHNIKATIRTPIMANGLYLHRVYY.

Asp-51 acts as the Nucleophile in catalysis. Tyr-107 serves as a coordination point for substrate.

Belongs to the tRNA pseudouridine synthase TruA family. In terms of assembly, homodimer.

It carries out the reaction uridine(38/39/40) in tRNA = pseudouridine(38/39/40) in tRNA. Functionally, formation of pseudouridine at positions 38, 39 and 40 in the anticodon stem and loop of transfer RNAs. The polypeptide is tRNA pseudouridine synthase A (Helicobacter pylori (strain Shi470)).